The following is a 322-amino-acid chain: Putative ankyrin repeat protein L897 (322 aa).

ANK repeat units lie at residues 88–117 (DNEY…SYDM), 181–210 (NIID…FWAN), and 248–277 (NKNE…QTDH).

This is Putative ankyrin repeat protein L897 from Acanthamoeba polyphaga (Amoeba).